Reading from the N-terminus, the 72-residue chain is Translational regulator CsrA (72 aa).

This sequence belongs to the CsrA/RsmA family. In terms of assembly, homodimer; the beta-strands of each monomer intercalate to form a hydrophobic core, while the alpha-helices form wings that extend away from the core.

The protein resides in the cytoplasm. A translational regulator that binds mRNA to regulate translation initiation and/or mRNA stability. Usually binds in the 5'-UTR at or near the Shine-Dalgarno sequence preventing ribosome-binding, thus repressing translation. Its main target seems to be the major flagellin gene, while its function is anatagonized by FliW. The protein is Translational regulator CsrA of Agathobacter rectalis (strain ATCC 33656 / DSM 3377 / JCM 17463 / KCTC 5835 / VPI 0990) (Eubacterium rectale).